The following is a 221-amino-acid chain: MHLKIGTLTIRTIMLFTLCTFLTLFAFSTCFDETKTINLESQEIYDDLFESKEDLQNERNGNSDEYRYMGSNSINDINRYNRLSMQPENEFLQERSLKPAANLPLRFGRTSDDKIAKSIPSFDKIAKSIPNLPQRFGRYLSGKTKVQSMANLPQRFGRAQYTNHFVHSLDTLPLRFGRTPHSDRLQYEMNSHPLELKNPEEDSDRKKRQAMTFRIRTDLQM.

An N-terminal signal peptide occupies residues 1–25 (MHLKIGTLTIRTIMLFTLCTFLTLF). Residues 26-95 (AFSTCFDETK…QPENEFLQER (70 aa)) constitute a propeptide that is removed on maturation. Phe-107 is subject to Phenylalanine amide. Positions 110 to 127 (TSDDKIAKSIPSFDKIAK) are excised as a propeptide. Phenylalanine amide occurs at positions 136, 156, and 176. Residues 179–221 (TPHSDRLQYEMNSHPLELKNPEEDSDRKKRQAMTFRIRTDLQM) constitute a propeptide that is removed on maturation.

The protein belongs to the FARP (FMRFamide related peptide) family. As to expression, observed in the suprachiasmatic nucleus and in several telencephalic and diencephalic regions.

The protein localises to the secreted. Its function is as follows. Primary role is to release GH from the pituitary. May act as an endogenous ligand in the bullfrog hypothalamo-hypophysial system. The chain is Growth hormone-releasing peptides from Aquarana catesbeiana (American bullfrog).